The chain runs to 218 residues: Adenylate kinase (218 aa).

An ATP-binding site is contributed by 10 to 15 (GAGKGT). The segment at 30–59 (STGDMLRAAIAKGTPLGLSAQKIMESGGLV) is NMP. Residues Thr-31, Arg-36, 57–59 (GLV), 85–88 (GFPR), and Gln-92 each bind AMP. The tract at residues 122 to 159 (GRRIHQPSGRVYHVVNQPPKNPGVDDITGEPLIQRDDD) is LID. ATP is bound by residues Arg-123 and 132–133 (VY). Arg-156 and Arg-167 together coordinate AMP. Gly-203 contributes to the ATP binding site.

This sequence belongs to the adenylate kinase family. Monomer.

The protein localises to the cytoplasm. The catalysed reaction is AMP + ATP = 2 ADP. It participates in purine metabolism; AMP biosynthesis via salvage pathway; AMP from ADP: step 1/1. Catalyzes the reversible transfer of the terminal phosphate group between ATP and AMP. Plays an important role in cellular energy homeostasis and in adenine nucleotide metabolism. The polypeptide is Adenylate kinase (Legionella pneumophila (strain Corby)).